The sequence spans 749 residues: Putative Xaa-Pro aminopeptidase FRA1 (749 aa).

The disordered stretch occupies residues 1-33 (MTSKPSTSDGRAHSISHVPGTHMRGTSASHSPR). Phosphoserine is present on residues Ser69, Ser92, and Ser95. Residues Asp551, Asp562, Glu660, and Glu674 each coordinate Mn(2+).

This sequence belongs to the peptidase M24B family. Homodimer. Interacts with FRA2. It depends on Mn(2+) as a cofactor.

Its subcellular location is the cytoplasm. The catalysed reaction is Release of any N-terminal amino acid, including proline, that is linked to proline, even from a dipeptide or tripeptide.. Its function is as follows. Involved in the regulation of the iron regulon in responss to decreased mitochondrial iron-sulfur cluster synthesis. In Saccharomyces cerevisiae (strain ATCC 204508 / S288c) (Baker's yeast), this protein is Putative Xaa-Pro aminopeptidase FRA1 (FRA1).